Consider the following 460-residue polypeptide: MDILLNKPITIVGGGLAGSALALLLGQKGFPIQVIEKRPKQSENIRARSINLALSDRGVKTLTKTGYVDDILKIAIPMKGRMIHSLDSVQTFQAYSSDSNKHLYSVSRQLLNDRLREHTEKLENVKFIFSDACKSIDLKQCTIQTQDSNQTIEASTIIGCDGAFSAVRGSMVKLDRQDYSQSYLKHGYKELCIPSGPNQTFQIDKNSLHIWPRGSFMMIALPNIDGSFTCTLFFPFDGPLSFSSLDTREKVDQFFKDYFPDAYKLMPDLLDDYFENPTSSLVTVKTEPYHYQGKVVLVGDAAHAIVPFYGQGMNAAFEDVLELFNCFEDKSLYPSSTDKPFDNDHFNNIYKKYQENRKANSDAIAEMAVENFFEMRDHVGDALFLFKKKVEHLLEVKFPSRYISRYELISFSTQPYAYAQKIGLANQQILNELVKGNDDYNIEKIDLVLADQLIKKYLNK.

It belongs to the aromatic-ring hydroxylase family. KMO subfamily. The cofactor is FAD.

The protein localises to the mitochondrion. The enzyme catalyses L-kynurenine + NADPH + O2 + H(+) = 3-hydroxy-L-kynurenine + NADP(+) + H2O. The protein operates within cofactor biosynthesis; NAD(+) biosynthesis; quinolinate from L-kynurenine: step 1/3. Functionally, catalyzes the hydroxylation of L-kynurenine (L-Kyn) to form 3-hydroxy-L-kynurenine (L-3OHKyn). Required for synthesis of quinolinic acid. The protein is Kynurenine 3-monooxygenase of Dictyostelium discoideum (Social amoeba).